The chain runs to 626 residues: Lipoprotein LpqB (626 aa).

Residues 1 to 23 form the signal peptide; the sequence is MIGQANRIAAAVSTACLAVLLAG. The N-palmitoyl cysteine moiety is linked to residue Cys24. Cys24 carries S-diacylglycerol cysteine lipidation. The tract at residues 428-457 is disordered; the sequence is EAEREEDLADDTEPGDTAVGSTERRETDRG. Positions 430 to 441 are enriched in acidic residues; the sequence is EREEDLADDTEP.

This sequence belongs to the LpqB lipoprotein family.

The protein resides in the cell membrane. The polypeptide is Lipoprotein LpqB (Thermobifida fusca (strain YX)).